The following is a 534-amino-acid chain: Bifunctional purine biosynthesis protein PurH (534 aa).

Residues 6–151 (TRLPVRRALI…KNHKDVAIVV (146 aa)) form the MGS-like domain.

This sequence belongs to the PurH family.

It carries out the reaction (6R)-10-formyltetrahydrofolate + 5-amino-1-(5-phospho-beta-D-ribosyl)imidazole-4-carboxamide = 5-formamido-1-(5-phospho-D-ribosyl)imidazole-4-carboxamide + (6S)-5,6,7,8-tetrahydrofolate. The enzyme catalyses IMP + H2O = 5-formamido-1-(5-phospho-D-ribosyl)imidazole-4-carboxamide. The protein operates within purine metabolism; IMP biosynthesis via de novo pathway; 5-formamido-1-(5-phospho-D-ribosyl)imidazole-4-carboxamide from 5-amino-1-(5-phospho-D-ribosyl)imidazole-4-carboxamide (10-formyl THF route): step 1/1. It participates in purine metabolism; IMP biosynthesis via de novo pathway; IMP from 5-formamido-1-(5-phospho-D-ribosyl)imidazole-4-carboxamide: step 1/1. This chain is Bifunctional purine biosynthesis protein PurH, found in Stutzerimonas stutzeri (strain A1501) (Pseudomonas stutzeri).